The chain runs to 570 residues: Formate--tetrahydrofolate ligase (570 aa).

65 to 72 is a binding site for ATP; sequence TPHGEGKT.

Belongs to the formate--tetrahydrofolate ligase family.

The enzyme catalyses (6S)-5,6,7,8-tetrahydrofolate + formate + ATP = (6R)-10-formyltetrahydrofolate + ADP + phosphate. Its pathway is one-carbon metabolism; tetrahydrofolate interconversion. The sequence is that of Formate--tetrahydrofolate ligase from Shewanella putrefaciens (strain CN-32 / ATCC BAA-453).